We begin with the raw amino-acid sequence, 334 residues long: N-acetyl-gamma-glutamyl-phosphate reductase (334 aa).

Cys154 is a catalytic residue.

The protein belongs to the NAGSA dehydrogenase family. Type 1 subfamily.

It is found in the cytoplasm. It catalyses the reaction N-acetyl-L-glutamate 5-semialdehyde + phosphate + NADP(+) = N-acetyl-L-glutamyl 5-phosphate + NADPH + H(+). It participates in amino-acid biosynthesis; L-arginine biosynthesis; N(2)-acetyl-L-ornithine from L-glutamate: step 3/4. In terms of biological role, catalyzes the NADPH-dependent reduction of N-acetyl-5-glutamyl phosphate to yield N-acetyl-L-glutamate 5-semialdehyde. The sequence is that of N-acetyl-gamma-glutamyl-phosphate reductase from Pectobacterium carotovorum subsp. carotovorum (strain PC1).